The chain runs to 229 residues: Potassium/proton antiporter CemA (229 aa).

2 consecutive transmembrane segments (helical) span residues 7–27 (LASL…SISF) and 106–126 (IISH…YFIL).

It belongs to the CemA family.

The protein resides in the plastid. It is found in the chloroplast inner membrane. The catalysed reaction is K(+)(in) + H(+)(out) = K(+)(out) + H(+)(in). Contributes to K(+)/H(+) antiport activity by supporting proton efflux to control proton extrusion and homeostasis in chloroplasts in a light-dependent manner to modulate photosynthesis. Prevents excessive induction of non-photochemical quenching (NPQ) under continuous-light conditions. Indirectly promotes efficient inorganic carbon uptake into chloroplasts. The sequence is that of Potassium/proton antiporter CemA from Cycas taitungensis (Prince sago).